The primary structure comprises 1180 residues: Pesticidal crystal protein Cry4Aa (1180 aa).

This sequence belongs to the delta endotoxin family.

In terms of biological role, promotes colloidosmotic lysis by binding to the midgut epithelial cells of insects. The chain is Pesticidal crystal protein Cry4Aa (cry4Aa) from Bacillus thuringiensis subsp. israelensis.